The sequence spans 513 residues: Meiotically up-regulated gene 133 protein (513 aa).

It belongs to the UPF0300 family.

Its subcellular location is the golgi apparatus. It is found in the vacuole membrane. Has a role in meiosis. In Schizosaccharomyces pombe (strain 972 / ATCC 24843) (Fission yeast), this protein is Meiotically up-regulated gene 133 protein (mug133).